Consider the following 373-residue polypeptide: MAAQARTPRSRILGCSSMLRFLRSLVGSKGSSKSSNRPLNRSQPSSSPEQDVVSPTMGHQGGCGRKETRPRVLSATSSNGKREPRPRVLSAAPSNQRLRDASGLGTGDTGSQTLTSKDVLKLRAQGVEVTSVPTRGTWEVLEHLPEKKGEEGEPAGEVSGASDRAHFGQALEAEQGCLQWVSGPMVLPPEAFIKEEEDEHCLIDFGDLRLSSCKVGSTPWNYLLGLYKQLQKSAMTKAQRPDADAPQFALKDSSPTEERGEREEAVDESSLKWCAPRASSDDSNLKWCAPRNSTYQSPLQKTFRSTDTVGFVESELKKILAVQREARLWKVGNPEGRELLTQPDITLEEAGMVDGQHLLLEEMDEMGNWPPPE.

Disordered stretches follow at residues 26–113 (VGSK…GSQT) and 237–268 (KAQR…AVDE). Residues 36–49 (NRPLNRSQPSSSPE) are compositionally biased toward polar residues. Residues 226 to 373 (LYKQLQKSAM…DEMGNWPPPE (148 aa)) are required for induction of mitochondrial fragmentation. Basic and acidic residues predominate over residues 254 to 263 (SPTEERGERE). The tract at residues 301 to 373 (KTFRSTDTVG…DEMGNWPPPE (73 aa)) is interaction with GGN.

Interacts with CCDC159. Interacts with GGN.

Its subcellular location is the cytoplasm. The protein resides in the membrane. It localises to the golgi apparatus. It is found in the mitochondrion intermembrane space. Induces mitochondrial fragmentation, possibly by promoting DNM1L-dependent fission and may play a role in mitochondrial morphogenesis during spermatogenesis. This Rattus norvegicus (Rat) protein is Gametogenetin-binding protein 1 (Ggnbp1).